The sequence spans 209 residues: Probable septum site-determining protein MinC (209 aa).

The protein belongs to the MinC family. In terms of assembly, interacts with MinD and FtsZ.

Functionally, cell division inhibitor that blocks the formation of polar Z ring septums. Rapidly oscillates between the poles of the cell to destabilize FtsZ filaments that have formed before they mature into polar Z rings. Prevents FtsZ polymerization. In Clostridium kluyveri (strain NBRC 12016), this protein is Probable septum site-determining protein MinC.